Here is a 159-residue protein sequence, read N- to C-terminus: Globin-like protein (159 aa).

One can recognise a Globin domain in the interval 1 to 152; sequence MSMNRQEISD…FNAESQTHLK (152 aa). H101 contacts heme.

Belongs to the globin family. Homodimer. As to expression, expressed mainly in a subset of neuronal cells and in head muscular tissue.

It is found in the cytoplasm. In terms of biological role, may be a globin and may play a role in oxygen transport. The polypeptide is Globin-like protein (glb-1) (Caenorhabditis elegans).